A 173-amino-acid polypeptide reads, in one-letter code: ATP-dependent protease subunit HslV (173 aa).

Residue T2 is part of the active site. The Na(+) site is built by G158, D161, and S164.

The protein belongs to the peptidase T1B family. HslV subfamily. As to quaternary structure, a double ring-shaped homohexamer of HslV is capped on each side by a ring-shaped HslU homohexamer. The assembly of the HslU/HslV complex is dependent on binding of ATP.

It localises to the cytoplasm. It catalyses the reaction ATP-dependent cleavage of peptide bonds with broad specificity.. Its activity is regulated as follows. Allosterically activated by HslU binding. Functionally, protease subunit of a proteasome-like degradation complex believed to be a general protein degrading machinery. The chain is ATP-dependent protease subunit HslV from Glaesserella parasuis serovar 5 (strain SH0165) (Haemophilus parasuis).